A 206-amino-acid polypeptide reads, in one-letter code: Large ribosomal subunit protein uL4 (206 aa).

Positions 43–52 are enriched in polar residues; that stretch reads NKRQGTQSAK. Residues 43-86 are disordered; it reads NKRQGTQSAKTRAEVSGGGRKPWRQKGTGHARQGSTRSPQWKGG.

Belongs to the universal ribosomal protein uL4 family. In terms of assembly, part of the 50S ribosomal subunit.

In terms of biological role, one of the primary rRNA binding proteins, this protein initially binds near the 5'-end of the 23S rRNA. It is important during the early stages of 50S assembly. It makes multiple contacts with different domains of the 23S rRNA in the assembled 50S subunit and ribosome. Forms part of the polypeptide exit tunnel. The sequence is that of Large ribosomal subunit protein uL4 from Lachnoclostridium phytofermentans (strain ATCC 700394 / DSM 18823 / ISDg) (Clostridium phytofermentans).